A 508-amino-acid polypeptide reads, in one-letter code: Mevalonate kinase ERG12 (508 aa).

The tract at residues 1-46 is disordered; it reads MPPSNPAMVNGLNGSHANGNGNGHNHISDSGSETSGESSNGSGRRR. Over residues 10–42 the composition is skewed to low complexity; that stretch reads NGLNGSHANGNGNGHNHISDSGSETSGESSNGS. ATP-binding positions include K68, S200, and 205–211; that span reads GAGLGSS. Positions 211 and 256 each coordinate Mg(2+). D267 functions as the Proton acceptor in the catalytic mechanism.

This sequence belongs to the GHMP kinase family. Mevalonate kinase subfamily. Homodimer. Mg(2+) serves as cofactor.

Its subcellular location is the cytoplasm. It localises to the cytosol. The catalysed reaction is (R)-mevalonate + ATP = (R)-5-phosphomevalonate + ADP + H(+). It functions in the pathway isoprenoid biosynthesis; isopentenyl diphosphate biosynthesis via mevalonate pathway; isopentenyl diphosphate from (R)-mevalonate: step 1/3. Its function is as follows. Mevalonate kinase; part of the second module of ergosterol biosynthesis pathway that includes the middle steps of the pathway. ERG12 converts mevalonate into 5-phosphomevalonate. The second module is carried out in the vacuole and involves the formation of farnesyl diphosphate, which is also an important intermediate in the biosynthesis of ubiquinone, dolichol, heme and prenylated proteins. Activity by the mevalonate kinase ERG12 (FG05912) first converts mevalonate into 5-phosphomevalonate. 5-phosphomevalonate is then further converted to 5-diphosphomevalonate by the phosphomevalonate kinase ERG8 (FG09764). The diphosphomevalonate decarboxylase ERG19 (FG10424) then produces isopentenyl diphosphate. The isopentenyl-diphosphate delta-isomerase IDI1 (FG09722) then catalyzes the 1,3-allylic rearrangement of the homoallylic substrate isopentenyl (IPP) to its highly electrophilic allylic isomer, dimethylallyl diphosphate (DMAPP). Finally the farnesyl diphosphate synthase ERG20 (FG06784) catalyzes the sequential condensation of isopentenyl pyrophosphate with dimethylallyl pyrophosphate, and then with the resultant geranylpyrophosphate to the ultimate product farnesyl pyrophosphate. The protein is Mevalonate kinase ERG12 of Gibberella zeae (strain ATCC MYA-4620 / CBS 123657 / FGSC 9075 / NRRL 31084 / PH-1) (Wheat head blight fungus).